We begin with the raw amino-acid sequence, 369 residues long: 4-hydroxy-3-methylbut-2-en-1-yl diphosphate synthase (flavodoxin) (369 aa).

[4Fe-4S] cluster-binding residues include C270, C273, C305, and E312.

The protein belongs to the IspG family. [4Fe-4S] cluster serves as cofactor.

It carries out the reaction (2E)-4-hydroxy-3-methylbut-2-enyl diphosphate + oxidized [flavodoxin] + H2O + 2 H(+) = 2-C-methyl-D-erythritol 2,4-cyclic diphosphate + reduced [flavodoxin]. It functions in the pathway isoprenoid biosynthesis; isopentenyl diphosphate biosynthesis via DXP pathway; isopentenyl diphosphate from 1-deoxy-D-xylulose 5-phosphate: step 5/6. Functionally, converts 2C-methyl-D-erythritol 2,4-cyclodiphosphate (ME-2,4cPP) into 1-hydroxy-2-methyl-2-(E)-butenyl 4-diphosphate. The protein is 4-hydroxy-3-methylbut-2-en-1-yl diphosphate synthase (flavodoxin) of Pseudomonas entomophila (strain L48).